The primary structure comprises 307 residues: Protoheme IX farnesyltransferase (307 aa).

The next 8 membrane-spanning stretches (helical) occupy residues 32–52 (MGIV…ALHF), 65–85 (FFTI…NNYI), 108–128 (PGFA…FLLL), 131–151 (PMAV…YTLW), 158–178 (LNTV…WAAI), 186–206 (IAWM…LALA), 251–271 (LGIT…ALGL), and 287–307 (FVYS…VTFF).

Belongs to the UbiA prenyltransferase family. Protoheme IX farnesyltransferase subfamily. In terms of assembly, interacts with CtaA.

Its subcellular location is the cell membrane. The enzyme catalyses heme b + (2E,6E)-farnesyl diphosphate + H2O = Fe(II)-heme o + diphosphate. The protein operates within porphyrin-containing compound metabolism; heme O biosynthesis; heme O from protoheme: step 1/1. Converts heme B (protoheme IX) to heme O by substitution of the vinyl group on carbon 2 of heme B porphyrin ring with a hydroxyethyl farnesyl side group. The chain is Protoheme IX farnesyltransferase from Bacillus mycoides (strain KBAB4) (Bacillus weihenstephanensis).